Reading from the N-terminus, the 352-residue chain is Photosystem II D2 protein (352 aa).

Thr-2 is modified (N-acetylthreonine). Thr-2 bears the Phosphothreonine mark. A helical membrane pass occupies residues Cys-40 to Thr-60. His-117 provides a ligand contact to chlorophyll a. The helical transmembrane segment at Gly-124–Pro-140 threads the bilayer. Pheophytin a-binding residues include Gln-129 and Asn-142. A helical membrane pass occupies residues Val-152–Ala-165. His-197 is a chlorophyll a binding site. The helical transmembrane segment at Ala-207–Asp-227 threads the bilayer. Positions 214 and 261 each coordinate a plastoquinone. His-214 is a Fe cation binding site. Residue His-268 coordinates Fe cation. The chain crosses the membrane as a helical span at residues Gly-278–Arg-294.

This sequence belongs to the reaction center PufL/M/PsbA/D family. In terms of assembly, PSII is composed of 1 copy each of membrane proteins PsbA, PsbB, PsbC, PsbD, PsbE, PsbF, PsbH, PsbI, PsbJ, PsbK, PsbL, PsbM, PsbT, PsbX, PsbY, PsbZ, Psb30/Ycf12, at least 3 peripheral proteins of the oxygen-evolving complex and a large number of cofactors. It forms dimeric complexes. Requires The D1/D2 heterodimer binds P680, chlorophylls that are the primary electron donor of PSII, and subsequent electron acceptors. It shares a non-heme iron and each subunit binds pheophytin, quinone, additional chlorophylls, carotenoids and lipids. There is also a Cl(-1) ion associated with D1 and D2, which is required for oxygen evolution. The PSII complex binds additional chlorophylls, carotenoids and specific lipids. as cofactor.

The protein resides in the plastid. The protein localises to the chloroplast thylakoid membrane. It catalyses the reaction 2 a plastoquinone + 4 hnu + 2 H2O = 2 a plastoquinol + O2. Functionally, photosystem II (PSII) is a light-driven water:plastoquinone oxidoreductase that uses light energy to abstract electrons from H(2)O, generating O(2) and a proton gradient subsequently used for ATP formation. It consists of a core antenna complex that captures photons, and an electron transfer chain that converts photonic excitation into a charge separation. The D1/D2 (PsbA/PsbD) reaction center heterodimer binds P680, the primary electron donor of PSII as well as several subsequent electron acceptors. D2 is needed for assembly of a stable PSII complex. In Stigeoclonium helveticum (Green alga), this protein is Photosystem II D2 protein.